A 465-amino-acid chain; its full sequence is Probable Xaa-Pro aminopeptidase pepP (465 aa).

Residues Asp-263, Asp-274, Glu-397, and Glu-437 each contribute to the Mn(2+) site.

The protein belongs to the peptidase M24B family. The cofactor is Mn(2+).

It catalyses the reaction Release of any N-terminal amino acid, including proline, that is linked to proline, even from a dipeptide or tripeptide.. Its function is as follows. Catalyzes the removal of a penultimate prolyl residue from the N-termini of peptides. This chain is Probable Xaa-Pro aminopeptidase pepP (pepP), found in Emericella nidulans (strain FGSC A4 / ATCC 38163 / CBS 112.46 / NRRL 194 / M139) (Aspergillus nidulans).